Here is a 588-residue protein sequence, read N- to C-terminus: MNNSINHKFHHISRAEYQELLAVSRGDAVADYIIDNVSILDLINGGEISGPIVIKGRYIAGVGAEYTDAPALQRIDARGATAVPGFIDAHLHIESSMMTPVTFETATLPRGLTTVICDPHEIVNVMGEAGFAWFARCAEQARQNQYLQVSSCVPALEGCDVNGASFTLEQMLAWRDHPQVTGLAEMMDYPGVISGQNALLDKLDAFRHLTLDGHCPGLGGKELNAYIAAGIENCHESYQLEEGRRKLQLGMSLMIREGSAARNLNALAPLINEFNSPQCMLCTDDRNPWEIAHEGHIDALIRRLIEQHNVPLHVAYRVASWSTARHFGLNHLGLLAPGKQADIVLLSDARKVTVQQVLVKGEPIDAQTLQAEESARLAQSAPPYGNTIARQPVSASDFALQFTPGKRYRVIDVIHNELITHSRSSVYSENGFDRDDVCFIAVLERYGQRLAPACGLLGGFGLNEGALAATVSHDSHNIVVIGRSAEEMALAVNQVIQDGGGLCVVRNGQVQSHLPLPIAGLMSTDTAQSLAEQIDALKAAARECGPLPDEPFIQMAFLSLPVIPALKLTSQGLFDGEKFAFTTLEVTE.

Belongs to the metallo-dependent hydrolases superfamily. Adenine deaminase family. As to quaternary structure, homodimer. Requires Mn(2+) as cofactor.

The catalysed reaction is adenine + H2O + H(+) = hypoxanthine + NH4(+). The sequence is that of Adenine deaminase from Escherichia coli O17:K52:H18 (strain UMN026 / ExPEC).